Consider the following 349-residue polypeptide: Insulin gene enhancer protein ISL-1 (349 aa).

LIM zinc-binding domains lie at 17–70 (CVGC…CKRD) and 79–133 (CAKC…RADH). The homeobox DNA-binding region spans 181–240 (TTRVRTVLNEKQLHTLRTCYAANPRPDALMKEQLVEMTGLSPRVIRVWFQNKRCKDKKRS). Residues 312–349 (VNFSEGGPGSNSTGSEVASMSSQLPDTPNSMVASPIEA) are disordered. The span at 321–343 (SNSTGSEVASMSSQLPDTPNSMV) shows a compositional bias: polar residues.

The protein resides in the nucleus. In terms of biological role, acts as a transcriptional regulator. Recognizes and binds to the consensus octamer binding site 5'-ATAATTAA-3' in promoter of target genes. Plays a fundamental role in the gene regulatory network essential for retinal ganglion cell (RGC) differentiation. Binds to insulin gene enhancer sequences. Defines subclasses of motoneurons that segregate into columns in the spinal cord and select distinct axon pathways. Acts in conjunction with LHX1, LHX3 and ISL2. Binds to insulin gene enhancer sequences. Essential for heart development. In Gallus gallus (Chicken), this protein is Insulin gene enhancer protein ISL-1 (ISL1).